Consider the following 141-residue polypeptide: Nucleoside triphosphatase NudI (141 aa).

The region spanning 1 to 141 (MRQRTIVCPL…RHTLALKGLL (141 aa)) is the Nudix hydrolase domain. The short motif at 38 to 59 (GGVEPGERIEEALRREVREELG) is the Nudix box element.

The protein belongs to the Nudix hydrolase family. NudI subfamily. As to quaternary structure, monomer. The cofactor is Mg(2+).

It catalyses the reaction a ribonucleoside 5'-triphosphate + H2O = a ribonucleoside 5'-phosphate + diphosphate + H(+). The catalysed reaction is a 2'-deoxyribonucleoside 5'-triphosphate + H2O = a 2'-deoxyribonucleoside 5'-phosphate + diphosphate + H(+). It carries out the reaction dUTP + H2O = dUMP + diphosphate + H(+). The enzyme catalyses dTTP + H2O = dTMP + diphosphate + H(+). It catalyses the reaction dCTP + H2O = dCMP + diphosphate + H(+). Its function is as follows. Catalyzes the hydrolysis of nucleoside triphosphates, with a preference for pyrimidine deoxynucleoside triphosphates (dUTP, dTTP and dCTP). The polypeptide is Nucleoside triphosphatase NudI (Salmonella agona (strain SL483)).